A 572-amino-acid polypeptide reads, in one-letter code: Capsid vertex component 2 (572 aa).

Residues 1–58 (MFRPRFEPMNLPKDSNKPSTLMVLADRLNFISCAEGSSKYASKLFEGTLIDAEIMTNR) form an interaction with major capsid protein/MCP region.

The protein belongs to the herpesviridae CVC2 protein family. Heterodimerizes with CVC1. Interacts with major capsid protein/MCP and triplex capsid protein 1/TRX1 at the pentamer vertices. Interacts with the large tegument protein/LTP.

It localises to the virion. It is found in the host nucleus. Capsid vertex-specific component that plays a role during viral DNA encapsidation, assuring correct genome cleavage and presumably stabilizing capsids that contain full-length viral genomes. Participates in the interaction between the capsid and the tegument through interaction with the large tegument protein/LTP. The sequence is that of Capsid vertex component 2 from Infectious laryngotracheitis virus (strain Thorne V882) (ILTV).